The chain runs to 293 residues: Diaminopimelate epimerase (293 aa).

Substrate contacts are provided by Asn15, Gln47, and Asn67. The Proton donor role is filled by Cys76. Substrate is bound by residues 77-78, Asn163, Asn197, and 215-216; these read GN and ER. The active-site Proton acceptor is the Cys224. 225 to 226 is a binding site for substrate; sequence GS.

The protein belongs to the diaminopimelate epimerase family. In terms of assembly, homodimer.

Its subcellular location is the cytoplasm. The catalysed reaction is (2S,6S)-2,6-diaminopimelate = meso-2,6-diaminopimelate. It functions in the pathway amino-acid biosynthesis; L-lysine biosynthesis via DAP pathway; DL-2,6-diaminopimelate from LL-2,6-diaminopimelate: step 1/1. Catalyzes the stereoinversion of LL-2,6-diaminopimelate (L,L-DAP) to meso-diaminopimelate (meso-DAP), a precursor of L-lysine and an essential component of the bacterial peptidoglycan. This is Diaminopimelate epimerase from Chelativorans sp. (strain BNC1).